A 909-amino-acid chain; its full sequence is SCY1-like protein 2 B (909 aa).

The 305-residue stretch at 39-343 (YELLDQIGSA…ALDFTGSNFF (305 aa)) folds into the Protein kinase domain. HEAT repeat units lie at residues 311–348 (SIPSELVSDLQRMLSTNESFRPTALDFTGSNFFRSDAR), 350–382 (RALRFLDHLLERDNMQKSEFLKALSDMWKDFDS), 383–401 (RVLRYKVLPPLCAELRNLV), 402–439 (LQPIILPMVLTIAQSQDRTDFELITLPALVPVLSTASG), 465–502 (VLPLLLRAYNDNDVRIQEEVLKRSTSVAKQLDGQVVRQ), 499–537 (VVRQAILPRVHGLALKTTVAAVRVNALLCLAELVQTLDK), and 578–617 (FTAEHVLTLMMPLLTAQQLNVQQFAKYMLFVKDILRKIEE). Disordered regions lie at residues 624 to 772 (NDSG…VAST) and 804 to 909 (SASL…LDLL). 5 stretches are compositionally biased toward polar residues: residues 638–648 (NGLQFQSSTQI), 678–712 (PASSRHNTNDQFNKSTDQSQPSIMSTLPNKTTAPT), 724–747 (RQSSSLTAPATDNQTQLNTGTSFA), 804–828 (SASLSSLKPPQQGNQGISANNQDPL), and 835–852 (KQSQGMPSFTSGSYNNQK).

Belongs to the protein kinase superfamily. As to quaternary structure, interacts with VTI11, VTI12 and CHC1. Expressed in roots, seedlings, leaves, stems, flowers, and, at low levels, in siliques.

The protein resides in the golgi apparatus membrane. It is found in the golgi apparatus. It localises to the trans-Golgi network membrane. The protein localises to the prevacuolar compartment membrane. Probably inactive kinase. Component of the AP2-containing clathrin coat that regulates clathrin-dependent trafficking at plasma membrane, TGN and endosomal system. Together with SCYL2B, required for cell growth, plant growth and development. Essential for polarized root hair development probably by mediating the root hair tip localization of cellulose synthase-like D3 (CSLD3). This is SCY1-like protein 2 B from Arabidopsis thaliana (Mouse-ear cress).